Here is a 194-residue protein sequence, read N- to C-terminus: Fibroblast growth factor 7 (194 aa).

The signal sequence occupies residues M1–A31. Residues N45 and N149 are each glycosylated (N-linked (GlcNAc...) asparagine).

The protein belongs to the heparin-binding growth factors family. As to quaternary structure, interacts with FGFBP1. Interacts with FGFR2. Affinity between fibroblast growth factors (FGFs) and their receptors is increased by heparan sulfate glycosaminoglycans that function as coreceptors.

Growth factor active on keratinocytes. Possible major paracrine effector of normal epithelial cell proliferation. The chain is Fibroblast growth factor 7 (Fgf7) from Rattus norvegicus (Rat).